Reading from the N-terminus, the 142-residue chain is Large ribosomal subunit protein uL13 (142 aa).

This sequence belongs to the universal ribosomal protein uL13 family. As to quaternary structure, part of the 50S ribosomal subunit.

Functionally, this protein is one of the early assembly proteins of the 50S ribosomal subunit, although it is not seen to bind rRNA by itself. It is important during the early stages of 50S assembly. The sequence is that of Large ribosomal subunit protein uL13 from Coxiella burnetii (strain CbuK_Q154) (Coxiella burnetii (strain Q154)).